Reading from the N-terminus, the 225-residue chain is Uracil-DNA glycosylase (225 aa).

The Proton acceptor role is filled by Asp65.

It belongs to the uracil-DNA glycosylase (UDG) superfamily. UNG family.

It is found in the cytoplasm. The enzyme catalyses Hydrolyzes single-stranded DNA or mismatched double-stranded DNA and polynucleotides, releasing free uracil.. Excises uracil residues from the DNA which can arise as a result of misincorporation of dUMP residues by DNA polymerase or due to deamination of cytosine. This Alkaliphilus oremlandii (strain OhILAs) (Clostridium oremlandii (strain OhILAs)) protein is Uracil-DNA glycosylase.